A 231-amino-acid polypeptide reads, in one-letter code: Small ribosomal subunit protein uS5 (231 aa).

Residues 61–124 (KFRSKKPYRM…NRAKLNIIKV (64 aa)) enclose the S5 DRBM domain.

The protein belongs to the universal ribosomal protein uS5 family. As to quaternary structure, part of the 30S ribosomal subunit. Contacts protein S4.

With S4 and S12 plays an important role in translational accuracy. This is Small ribosomal subunit protein uS5 from Nanoarchaeum equitans (strain Kin4-M).